The sequence spans 271 residues: Formamidopyrimidine-DNA glycosylase (271 aa).

P2 serves as the catalytic Schiff-base intermediate with DNA. E3 (proton donor) is an active-site residue. The active-site Proton donor; for beta-elimination activity is the K58. DNA contacts are provided by H91, R110, and R152. Residues 237-271 (NVYGRGGKACKKCRKPLTEKKLGQRTTVYCTHCQK) form an FPG-type zinc finger. The Proton donor; for delta-elimination activity role is filled by R261.

It belongs to the FPG family. In terms of assembly, monomer. Zn(2+) serves as cofactor.

The enzyme catalyses Hydrolysis of DNA containing ring-opened 7-methylguanine residues, releasing 2,6-diamino-4-hydroxy-5-(N-methyl)formamidopyrimidine.. The catalysed reaction is 2'-deoxyribonucleotide-(2'-deoxyribose 5'-phosphate)-2'-deoxyribonucleotide-DNA = a 3'-end 2'-deoxyribonucleotide-(2,3-dehydro-2,3-deoxyribose 5'-phosphate)-DNA + a 5'-end 5'-phospho-2'-deoxyribonucleoside-DNA + H(+). Its function is as follows. Involved in base excision repair of DNA damaged by oxidation or by mutagenic agents. Acts as a DNA glycosylase that recognizes and removes damaged bases. Has a preference for oxidized purines, such as 7,8-dihydro-8-oxoguanine (8-oxoG). Has AP (apurinic/apyrimidinic) lyase activity and introduces nicks in the DNA strand. Cleaves the DNA backbone by beta-delta elimination to generate a single-strand break at the site of the removed base with both 3'- and 5'-phosphates. The sequence is that of Formamidopyrimidine-DNA glycosylase from Saccharophagus degradans (strain 2-40 / ATCC 43961 / DSM 17024).